A 122-amino-acid polypeptide reads, in one-letter code: uncharacterized protein (122 aa).

Residues 1 to 35 form the signal peptide; the sequence is MCCYVGKATKIFLCLAAALIVVGLVLGFGLAHRTW. The tract at residues 55–83 is disordered; it reads YGGGGGGGDPLPATSGAGDTPPGVPLTEP.

This is an uncharacterized protein from Oryza sativa subsp. japonica (Rice).